We begin with the raw amino-acid sequence, 79 residues long: Sec-independent protein translocase protein TatA (79 aa).

A helical membrane pass occupies residues 1 to 21; the sequence is MFSGISIWQLLILLAIVVLLF. Composition is skewed to basic and acidic residues over residues 44-58 and 66-79; these read MKDG…RLAD and QDAE…KDKA. The interval 44–79 is disordered; the sequence is MKDGEDEQDHKRLADDDQPQNKQDAEQKAEQEKDKA.

This sequence belongs to the TatA/E family. As to quaternary structure, the Tat system comprises two distinct complexes: a TatABC complex, containing multiple copies of TatA, TatB and TatC subunits, and a separate TatA complex, containing only TatA subunits. Substrates initially bind to the TatABC complex, which probably triggers association of the separate TatA complex to form the active translocon.

The protein resides in the cell inner membrane. Its function is as follows. Part of the twin-arginine translocation (Tat) system that transports large folded proteins containing a characteristic twin-arginine motif in their signal peptide across membranes. TatA could form the protein-conducting channel of the Tat system. The sequence is that of Sec-independent protein translocase protein TatA from Alcanivorax borkumensis (strain ATCC 700651 / DSM 11573 / NCIMB 13689 / SK2).